Consider the following 216-residue polypeptide: MEDPLIKILKQFSIEDAKYVEYNLDRQFLALKENPKPVGLVIANALISYQLTMPGERYWELFAKKVNSFNDLYDFVKKYNPRFLSNKLKRLERFKPYIDIIEQNREHYYENMVALNKFLAKIMNQNIYDKTIVFSIKMFAYAMRALGYKFKPFPFEIAIPLDYRLKKINPDLNYWFYVSKQTNIPPLHIDSLIWPIFRIKNLPKKFALLKEYLSNL.

8-oxoguanine-binding residues include glutamine 27, serine 48, and tryptophan 59. A helix-hairpin-helix region spans residues 106–170 (EHYYENMVAL…LDYRLKKINP (65 aa)). Catalysis depends on lysine 130, which acts as the Schiff-base intermediate with DNA. 8-oxoguanine is bound by residues phenylalanine 134 and proline 160. Aspartate 162 is a catalytic residue. Residues aspartate 190 and tryptophan 194 each contribute to the 8-oxoguanine site.

This sequence belongs to the archaeal N-glycosylase/DNA lyase (AGOG) family.

The enzyme catalyses 2'-deoxyribonucleotide-(2'-deoxyribose 5'-phosphate)-2'-deoxyribonucleotide-DNA = a 3'-end 2'-deoxyribonucleotide-(2,3-dehydro-2,3-deoxyribose 5'-phosphate)-DNA + a 5'-end 5'-phospho-2'-deoxyribonucleoside-DNA + H(+). In terms of biological role, DNA repair enzyme that is part of the base excision repair (BER) pathway; protects from oxidative damage by removing the major product of DNA oxidation, 8-oxoguanine (GO), from single- and double-stranded DNA substrates. The polypeptide is N-glycosylase/DNA lyase (Nanoarchaeum equitans (strain Kin4-M)).